The chain runs to 125 residues: Protein ApaG (125 aa).

In terms of domain architecture, ApaG spans 1 to 125 (MIEQPRICVQ…FRLAIPALIH (125 aa)).

This chain is Protein ApaG, found in Yersinia pestis bv. Antiqua (strain Antiqua).